The chain runs to 226 residues: MTTTELVALLHLASPALPIGAFSYSQGFEAALDANLIRDADTARDWIASGLTDVLAHGELPFLAHQLARWHAHDADALARENAWFVASRESAELRRETEQMGWSLAQLCASLEWGDAARRATLAALKPIALPTAFAYAAAAHDAGADATLAAYAFGWVENQTSAALKAVPLGQLAGQRIIVALRGAIDAAVKRALATPPDAVNTFAPQLGILSARHETQYSRLFRS.

This sequence belongs to the UreF family. UreD, UreF and UreG form a complex that acts as a GTP-hydrolysis-dependent molecular chaperone, activating the urease apoprotein by helping to assemble the nickel containing metallocenter of UreC. The UreE protein probably delivers the nickel.

Its subcellular location is the cytoplasm. In terms of biological role, required for maturation of urease via the functional incorporation of the urease nickel metallocenter. The polypeptide is Urease accessory protein UreF (Burkholderia vietnamiensis (strain G4 / LMG 22486) (Burkholderia cepacia (strain R1808))).